The following is a 371-amino-acid chain: Chaperone protein DnaJ (371 aa).

The region spanning 5 to 69 is the J domain; that stretch reads DYYEVLGLSK…QKRAQYDQFG (65 aa). The CR-type zinc-finger motif lies at 133 to 215; it reads GKELNVEIPV…CHGSGKVRKR (83 aa). Positions 146, 149, 163, 166, 189, 192, 203, and 206 each coordinate Zn(2+). CXXCXGXG motif repeat units follow at residues 146-153, 163-170, 189-196, and 203-210; these read CDTCKGSG, CKHCSGSG, CGHCSGTG, and CTTCHGSG.

Belongs to the DnaJ family. Homodimer. It depends on Zn(2+) as a cofactor.

It is found in the cytoplasm. Its function is as follows. Participates actively in the response to hyperosmotic and heat shock by preventing the aggregation of stress-denatured proteins and by disaggregating proteins, also in an autonomous, DnaK-independent fashion. Unfolded proteins bind initially to DnaJ; upon interaction with the DnaJ-bound protein, DnaK hydrolyzes its bound ATP, resulting in the formation of a stable complex. GrpE releases ADP from DnaK; ATP binding to DnaK triggers the release of the substrate protein, thus completing the reaction cycle. Several rounds of ATP-dependent interactions between DnaJ, DnaK and GrpE are required for fully efficient folding. Also involved, together with DnaK and GrpE, in the DNA replication of plasmids through activation of initiation proteins. The protein is Chaperone protein DnaJ of Bacillus cereus (strain ATCC 10987 / NRS 248).